Reading from the N-terminus, the 154-residue chain is uncharacterized protein (154 aa).

A run of 4 helical transmembrane segments spans residues 20–42 (FRLF…GQFG), 62–84 (FFGY…AVLL), 91–109 (ALGA…LINY), and 113–132 (IGVQ…LLWM).

It is found in the cell membrane. This is an uncharacterized protein from Bacillus subtilis (strain 168).